The following is a 247-amino-acid chain: C-type lectin domain family 7 member A (247 aa).

Over 1-44 the chain is Cytoplasmic; it reads MEYQSSVENLDEDGYTQLDFSSRNITRRSVVSEKGLCAASSHWR. An ITAM-like motif is present at residues 15–18; the sequence is YTQL. The chain crosses the membrane as a helical; Signal-anchor for type II membrane protein span at residues 45–65; sequence LIAVTLGILCSVMLVITVVLS. The Extracellular segment spans residues 66–247; that stretch reads TSGIWRSSSG…YSICEKKLSV (182 aa). Residues 81-101 show a composition bias toward polar residues; sequence SDSFPSRNKDNQSQPTQSSLE. Residues 81 to 103 are disordered; sequence SDSFPSRNKDNQSQPTQSSLEDS. N-linked (GlcNAc...) asparagine glycosylation is present at asparagine 91. 3 disulfide bridges follow: cysteine 120/cysteine 131, cysteine 148/cysteine 241, and cysteine 220/cysteine 233. Residues 127 to 242 enclose the C-type lectin domain; the sequence is HEDSCYLFST…CSVHSYSICE (116 aa). Position 146-153 (146-153) interacts with (1,3-beta-D-glucosyl)n; sequence RQCFQLGS. Residues lysine 157, aspartate 159, and glutamate 163 each contribute to the a divalent metal cation site. (1,3-beta-D-glucosyl)n is bound at residue glutamate 195. Glutamate 242 serves as a coordination point for a divalent metal cation.

As to quaternary structure, homodimer. Interacts with SYK; participates in leukocyte activation in presence of fungal pathogens. Interacts with CD37; this interaction controls CLEC7A-mediated IL-6 production. Post-translationally, phosphorylated on tyrosine residues in response to beta-glucan binding. Detected in bone marrow, monocytes, macrophages, dendritic cells and natural killer cells.

The protein localises to the cell membrane. Its function is as follows. Lectin that functions as a pattern recognizing receptor (PRR) specific for beta-1,3-linked and beta-1,6-linked glucans, which constitute cell wall constituents from pathogenic bacteria and fungi. Necessary for the TLR2-mediated inflammatory response and activation of NF-kappa-B: upon beta-glucan binding, recruits SYK via its ITAM motif and promotes a signaling cascade that activates some CARD domain-BCL10-MALT1 (CBM) signalosomes, leading to the activation of NF-kappa-B and MAP kinase p38 (MAPK11, MAPK12, MAPK13 and/or MAPK14) pathways which stimulate expression of genes encoding pro-inflammatory cytokines and chemokines. Enhances cytokine production in macrophages and dendritic cells. Mediates production of reactive oxygen species in the cell. Mediates phagocytosis of C.albicans conidia. Binds T-cells in a way that does not involve their surface glycans and plays a role in T-cell activation. Stimulates T-cell proliferation. Induces phosphorylation of SCIMP after binding beta-glucans. This is C-type lectin domain family 7 member A (CLEC7A) from Bos taurus (Bovine).